Reading from the N-terminus, the 515-residue chain is Probable cytosol aminopeptidase (515 aa).

Lys277 and Asp282 together coordinate Mn(2+). Lys289 is a catalytic residue. Positions 300, 359, and 361 each coordinate Mn(2+). Residue Arg363 is part of the active site.

It belongs to the peptidase M17 family. It depends on Mn(2+) as a cofactor.

It is found in the cytoplasm. The catalysed reaction is Release of an N-terminal amino acid, Xaa-|-Yaa-, in which Xaa is preferably Leu, but may be other amino acids including Pro although not Arg or Lys, and Yaa may be Pro. Amino acid amides and methyl esters are also readily hydrolyzed, but rates on arylamides are exceedingly low.. The enzyme catalyses Release of an N-terminal amino acid, preferentially leucine, but not glutamic or aspartic acids.. Its function is as follows. Presumably involved in the processing and regular turnover of intracellular proteins. Catalyzes the removal of unsubstituted N-terminal amino acids from various peptides. The chain is Probable cytosol aminopeptidase from Streptomyces griseus subsp. griseus (strain JCM 4626 / CBS 651.72 / NBRC 13350 / KCC S-0626 / ISP 5235).